We begin with the raw amino-acid sequence, 304 residues long: HTH-type transcriptional regulator BenM (304 aa).

The 58-residue stretch at 1–58 (MELRHLRYFVAVVEEQSFTKAADKLCIAQPPLSRQIQNLEEELGIQLLERGSRPVKTT) folds into the HTH lysR-type domain. The segment at residues 18–37 (FTKAADKLCIAQPPLSRQIQ) is a DNA-binding region (H-T-H motif). The benzoate site is built by serine 99 and leucine 104. Position 99 (serine 99) interacts with cis,cis-muconate. Threonine 128 contributes to the cis,cis-muconate binding site. The benzoate site is built by phenylalanine 144, arginine 160, and asparagine 202. Phenylalanine 203 is a cis,cis-muconate binding site. Benzoate is bound at residue tyrosine 293.

This sequence belongs to the LysR transcriptional regulatory family. Homotetramer; dimer of dimers. The dimers can also associate to form linear, higher oligomers (in vitro).

Its function is as follows. Positive regulator of the ben and cat genes for benzoate degradation. BenM is necessary for ben gene expression but not for expression of the cat genes, which can be regulated by CatM. Binds to the inducers cis,cis-muconate and benzoate. The sequence is that of HTH-type transcriptional regulator BenM (benM) from Acinetobacter baylyi (strain ATCC 33305 / BD413 / ADP1).